The following is a 319-amino-acid chain: D-alanine--D-alanine ligase (319 aa).

The interval Met-1 to Lys-23 is disordered. The ATP-grasp domain occupies Lys-120–Glu-313. Met-147–Thr-197 serves as a coordination point for ATP. Positions 264, 280, and 282 each coordinate Mg(2+).

The protein belongs to the D-alanine--D-alanine ligase family. Mg(2+) is required as a cofactor. It depends on Mn(2+) as a cofactor.

It localises to the cytoplasm. It carries out the reaction 2 D-alanine + ATP = D-alanyl-D-alanine + ADP + phosphate + H(+). It participates in cell wall biogenesis; peptidoglycan biosynthesis. Functionally, cell wall formation. In Roseobacter denitrificans (strain ATCC 33942 / OCh 114) (Erythrobacter sp. (strain OCh 114)), this protein is D-alanine--D-alanine ligase.